The chain runs to 121 residues: Large ribosomal subunit protein bL20 (121 aa).

Belongs to the bacterial ribosomal protein bL20 family.

Its function is as follows. Binds directly to 23S ribosomal RNA and is necessary for the in vitro assembly process of the 50S ribosomal subunit. It is not involved in the protein synthesizing functions of that subunit. The polypeptide is Large ribosomal subunit protein bL20 (Persephonella marina (strain DSM 14350 / EX-H1)).